A 269-amino-acid polypeptide reads, in one-letter code: Tropinone reductase homolog At2g29320 (269 aa).

An NADP(+)-binding site is contributed by leucine 19–histidine 43. Serine 152 is a binding site for substrate. The active-site Proton acceptor is the tyrosine 166.

The protein belongs to the short-chain dehydrogenases/reductases (SDR) family. SDR65C subfamily.

The chain is Tropinone reductase homolog At2g29320 from Arabidopsis thaliana (Mouse-ear cress).